We begin with the raw amino-acid sequence, 118 residues long: Small ribosomal subunit protein eS24 (118 aa).

The protein belongs to the eukaryotic ribosomal protein eS24 family.

The polypeptide is Small ribosomal subunit protein eS24 (Sulfolobus acidocaldarius (strain ATCC 33909 / DSM 639 / JCM 8929 / NBRC 15157 / NCIMB 11770)).